A 63-amino-acid polypeptide reads, in one-letter code: Large ribosomal subunit protein uL29 (63 aa).

It belongs to the universal ribosomal protein uL29 family.

This chain is Large ribosomal subunit protein uL29, found in Flavobacterium johnsoniae (strain ATCC 17061 / DSM 2064 / JCM 8514 / BCRC 14874 / CCUG 350202 / NBRC 14942 / NCIMB 11054 / UW101) (Cytophaga johnsonae).